The following is a 214-amino-acid chain: Soluble inorganic pyrophosphatase (214 aa).

Substrate is bound by residues lysine 64, arginine 78, and tyrosine 90. The Mg(2+) site is built by aspartate 100, aspartate 105, and aspartate 137. Residue tyrosine 174 participates in substrate binding.

It belongs to the PPase family. The cofactor is Mg(2+).

Its subcellular location is the cytoplasm. The enzyme catalyses diphosphate + H2O = 2 phosphate + H(+). This chain is Soluble inorganic pyrophosphatase (IPP), found in Oryza sativa subsp. indica (Rice).